Here is a 557-residue protein sequence, read N- to C-terminus: Anthrax toxin receptor-like (557 aa).

A signal peptide spans 1 to 25 (MRSHGRWGPCFLLFLLLLPPPLFRA). At 26 to 345 (GSLRYHGPGW…KSNVSVTSST (320 aa)) the chain is on the extracellular side. The region spanning 74–244 (DLYFILDKSG…KAMRDTVDAL (171 aa)) is the VWFA domain. The a divalent metal cation site is built by Ser82, Ser84, and Thr148. Residues 346 to 366 (CGIFSNWLYFLLPLLLLPLLL) form a helical membrane-spanning segment. Topologically, residues 367 to 557 (CCLWRLCRKK…PTSKAPNTQD (191 aa)) are cytoplasmic. Disordered stretches follow at residues 380 to 411 (EPPP…LPPP) and 497 to 557 (ESPS…NTQD). Basic and acidic residues predominate over residues 386–395 (KPEKEPEQEK). The segment covering 396-411 (PPPPPPPSPPPPLPPP) has biased composition (pro residues). Polar residues predominate over residues 534 to 557 (GTLQNPLCPSLPRSPTSKAPNTQD).

It belongs to the ATR family.

Its subcellular location is the membrane. The sequence is that of Anthrax toxin receptor-like (ANTXRL) from Macaca fascicularis (Crab-eating macaque).